A 92-amino-acid chain; its full sequence is Nodulation protein F (92 aa).

Residues 4–88 enclose the Carrier domain; the sequence is QLTVEIIAAI…DVVEAVRGLI (85 aa). Position 45 is an O-(pantetheine 4'-phosphoryl)serine (Ser-45).

Post-translationally, 4'-phosphopantetheine is transferred from CoA to a specific serine of apo-NodF.

Functionally, proposed to synthesize nod factor fatty acyl chain. Involved in trans-2,trans-4,trans-6,cis-11-octadecatetraenoic acid biosynthesis. The protein is Nodulation protein F (nodF) of Rhizobium leguminosarum bv. trifolii.